The sequence spans 324 residues: NADH-ubiquinone oxidoreductase chain 1 (324 aa).

8 helical membrane passes run 9–29 (LTMA…LTLV), 75–95 (ILFI…WIPL), 106–126 (LGLL…LWSG), 142–162 (VAQT…VIML), 177–197 (PLYL…STLA), 228–248 (LFFL…AILF), 259–279 (ELFP…FLWV), and 300–320 (LPLT…YAGI).

The protein belongs to the complex I subunit 1 family.

It localises to the mitochondrion inner membrane. It carries out the reaction a ubiquinone + NADH + 5 H(+)(in) = a ubiquinol + NAD(+) + 4 H(+)(out). In terms of biological role, core subunit of the mitochondrial membrane respiratory chain NADH dehydrogenase (Complex I) that is believed to belong to the minimal assembly required for catalysis. Complex I functions in the transfer of electrons from NADH to the respiratory chain. The immediate electron acceptor for the enzyme is believed to be ubiquinone. In Struthio camelus (Common ostrich), this protein is NADH-ubiquinone oxidoreductase chain 1 (MT-ND1).